Consider the following 89-residue polypeptide: Small ribosomal subunit protein bS20 (89 aa).

This sequence belongs to the bacterial ribosomal protein bS20 family.

In terms of biological role, binds directly to 16S ribosomal RNA. The chain is Small ribosomal subunit protein bS20 from Helicobacter acinonychis (strain Sheeba).